The following is a 145-amino-acid chain: 3-dehydroquinate dehydratase (145 aa).

Catalysis depends on Tyr-24, which acts as the Proton acceptor. Residues Asn-75, His-81, and Asp-88 each coordinate substrate. His-102 (proton donor) is an active-site residue. Substrate-binding positions include 103–104 and Arg-113; that span reads LS.

This sequence belongs to the type-II 3-dehydroquinase family. In terms of assembly, homododecamer.

It catalyses the reaction 3-dehydroquinate = 3-dehydroshikimate + H2O. Its pathway is metabolic intermediate biosynthesis; chorismate biosynthesis; chorismate from D-erythrose 4-phosphate and phosphoenolpyruvate: step 3/7. Its function is as follows. Catalyzes a trans-dehydration via an enolate intermediate. This Chelativorans sp. (strain BNC1) protein is 3-dehydroquinate dehydratase.